The primary structure comprises 151 residues: UPF0208 membrane protein YfbV (151 aa).

The next 2 membrane-spanning stretches (helical) occupy residues 46-65 and 69-91; these read YAIR…QIAL and LGPA…WWLG.

It belongs to the UPF0208 family.

It is found in the cell inner membrane. The protein is UPF0208 membrane protein YfbV of Shigella flexneri serotype 5b (strain 8401).